A 221-amino-acid polypeptide reads, in one-letter code: ATP-dependent dethiobiotin synthetase BioD (221 aa).

11 to 16 is an ATP binding site; it reads DIGKTL. Thr15 is a Mg(2+) binding site. Lys35 is an active-site residue. A substrate-binding site is contributed by Thr39. Residues Asp44 and 103 to 106 contribute to the ATP site; that span reads EGAG. Mg(2+) is bound by residues Asp44 and Glu103.

This sequence belongs to the dethiobiotin synthetase family. As to quaternary structure, homodimer. Mg(2+) is required as a cofactor.

Its subcellular location is the cytoplasm. The catalysed reaction is (7R,8S)-7,8-diammoniononanoate + CO2 + ATP = (4R,5S)-dethiobiotin + ADP + phosphate + 3 H(+). Its pathway is cofactor biosynthesis; biotin biosynthesis; biotin from 7,8-diaminononanoate: step 1/2. Functionally, catalyzes a mechanistically unusual reaction, the ATP-dependent insertion of CO2 between the N7 and N8 nitrogen atoms of 7,8-diaminopelargonic acid (DAPA, also called 7,8-diammoniononanoate) to form a ureido ring. This is ATP-dependent dethiobiotin synthetase BioD from Leptospira borgpetersenii serovar Hardjo-bovis (strain L550).